We begin with the raw amino-acid sequence, 463 residues long: Digalactosyldiacylglycerol synthase 2, chloroplastic (463 aa).

The N-terminal stretch at 1–22 (MGKKQHIAIFTTASLPWLTGTA) is a signal peptide.

The protein belongs to the glycosyltransferase group 1 family. Glycosyltransferase 4 subfamily. As to expression, high expression in nodules infected cells, and low in nodule and root vascular tissue.

It is found in the plastid. It localises to the chloroplast outer membrane. Its subcellular location is the plastid outer membrane. It carries out the reaction a 1,2-diacyl-3-O-(beta-D-galactosyl)-sn-glycerol + UDP-alpha-D-galactose = a 1,2-diacyl-3-O-[alpha-D-galactosyl-(1-&gt;6)-beta-D-galactosyl]-sn-glycerol + UDP + H(+). Its function is as follows. Involved in the synthesis of diacylglycerol galactolipids that are specifically found in thylakoid and in nodule peribacteroid membranes. Specific for alpha-glycosidic linkages. The protein is Digalactosyldiacylglycerol synthase 2, chloroplastic of Lotus japonicus (Lotus corniculatus var. japonicus).